The primary structure comprises 145 residues: Small ribosomal subunit protein eS19 (145 aa).

Lysine 23 is subject to N6-acetyllysine. At arginine 67 the chain carries Omega-N-methylarginine. N6-acetyllysine is present on residues lysine 111 and lysine 115. Lysine 143 carries the post-translational modification N6-succinyllysine.

This sequence belongs to the eukaryotic ribosomal protein eS19 family. In terms of assembly, component of the small ribosomal subunit. Part of the small subunit (SSU) processome, composed of more than 70 proteins and the RNA chaperone small nucleolar RNA (snoRNA) U3. Interacts with RPS19BP1; the interaction is direct and mediates the integration of RPS19 in state post-A1. Interacts with RPS19BP1.

The protein resides in the cytoplasm. Its subcellular location is the nucleus. It is found in the nucleolus. Its function is as follows. Component of the small ribosomal subunit. The ribosome is a large ribonucleoprotein complex responsible for the synthesis of proteins in the cell. Required for pre-rRNA processing and maturation of 40S ribosomal subunits. Part of the small subunit (SSU) processome, first precursor of the small eukaryotic ribosomal subunit. During the assembly of the SSU processome in the nucleolus, many ribosome biogenesis factors, an RNA chaperone and ribosomal proteins associate with the nascent pre-rRNA and work in concert to generate RNA folding, modifications, rearrangements and cleavage as well as targeted degradation of pre-ribosomal RNA by the RNA exosome. The protein is Small ribosomal subunit protein eS19 (RPS19) of Oryctolagus cuniculus (Rabbit).